The primary structure comprises 40 residues: Putative protein FAM86JP (40 aa).

The interval 1–40 (MPGAFSQNSSKRRAVLPRSHRVAGRGPAEAGCLPGAPAGS) is disordered. The segment covering 10 to 23 (SKRRAVLPRSHRVA) has biased composition (basic residues).

The polypeptide is Putative protein FAM86JP (Homo sapiens (Human)).